Reading from the N-terminus, the 101-residue chain is Small ribosomal subunit protein uS14 (101 aa).

The protein belongs to the universal ribosomal protein uS14 family. Part of the 30S ribosomal subunit. Contacts proteins S3 and S10.

Functionally, binds 16S rRNA, required for the assembly of 30S particles and may also be responsible for determining the conformation of the 16S rRNA at the A site. The chain is Small ribosomal subunit protein uS14 from Buchnera aphidicola subsp. Acyrthosiphon pisum (strain APS) (Acyrthosiphon pisum symbiotic bacterium).